The primary structure comprises 87 residues: Small ribosomal subunit protein bS20 (87 aa).

Positions M1–A15 are enriched in basic residues. The interval M1–T27 is disordered. Positions K16–T27 are enriched in basic and acidic residues.

The protein belongs to the bacterial ribosomal protein bS20 family.

In terms of biological role, binds directly to 16S ribosomal RNA. This chain is Small ribosomal subunit protein bS20, found in Citrifermentans bemidjiense (strain ATCC BAA-1014 / DSM 16622 / JCM 12645 / Bem) (Geobacter bemidjiensis).